We begin with the raw amino-acid sequence, 460 residues long: Interleukin-1 receptor-associated kinase 4 (460 aa).

M1 is subject to N-acetylmethionine. Residues 20 to 104 form the Death domain; that stretch reads RKLSDFIDPQ…APASLLLPDA (85 aa). An N6-acetyllysine modification is found at K34. The 269-residue stretch at 186–454 folds into the Protein kinase domain; it reads SVGGNKMGEG…PDIKKVQQLL (269 aa). Residues 192 to 200 and K213 each bind ATP; that span reads MGEGGFGVV. D311 functions as the Proton acceptor in the catalytic mechanism. ATP is bound by residues 313 to 316 and D329; that span reads KSAN. T342 and T345 each carry phosphothreonine. A Phosphoserine modification is found at S346.

Belongs to the protein kinase superfamily. TKL Ser/Thr protein kinase family. Pelle subfamily. In terms of assembly, associates with MYD88 and IRAK2 to form a ternary complex called the Myddosome. Once phosphorylated, IRAK4 dissociates from the receptor complex and then associates with the TNF receptor-associated factor 6 (TRAF6), IRAK1, and PELI1; this intermediate complex is required for subsequent NF-kappa-B activation. Direct binding of SMAD6 to PELI1 prevents complex formation and hence negatively regulates IL1R-TLR signaling and eventually NF-kappa-B-mediated gene expression. Interacts with IL1RL1. Interacts (when phosphorylated) with IRAK1. May interact (when phosphorylated) with IRAK3. It depends on Mg(2+) as a cofactor. In terms of processing, phosphorylated.

The protein localises to the cytoplasm. The catalysed reaction is L-seryl-[protein] + ATP = O-phospho-L-seryl-[protein] + ADP + H(+). It catalyses the reaction L-threonyl-[protein] + ATP = O-phospho-L-threonyl-[protein] + ADP + H(+). In terms of biological role, serine/threonine-protein kinase that plays a critical role in initiating innate immune response against foreign pathogens. Involved in Toll-like receptor (TLR) and IL-1R signaling pathways. Is rapidly recruited by MYD88 to the receptor-signaling complex upon TLR activation to form the Myddosome together with IRAK2. Phosphorylates initially IRAK1, thus stimulating the kinase activity and intensive autophosphorylation of IRAK1. Phosphorylates E3 ubiquitin ligases Pellino proteins (PELI1, PELI2 and PELI3) to promote pellino-mediated polyubiquitination of IRAK1. Then, the ubiquitin-binding domain of IKBKG/NEMO binds to polyubiquitinated IRAK1 bringing together the IRAK1-MAP3K7/TAK1-TRAF6 complex and the NEMO-IKKA-IKKB complex. In turn, MAP3K7/TAK1 activates IKKs (CHUK/IKKA and IKBKB/IKKB) leading to NF-kappa-B nuclear translocation and activation. Alternatively, phosphorylates TIRAP to promote its ubiquitination and subsequent degradation. Phosphorylates NCF1 and regulates NADPH oxidase activation after LPS stimulation suggesting a similar mechanism during microbial infections. The sequence is that of Interleukin-1 receptor-associated kinase 4 (IRAK4) from Homo sapiens (Human).